The following is a 441-amino-acid chain: tRNA (guanine(37)-N(1))-methyltransferase (441 aa).

The N-terminal 9 residues, M1–A9, are a transit peptide targeting the mitochondrion. S-adenosyl-L-methionine contacts are provided by residues R221, D248–L249, D276–G277, and N331.

Belongs to the class I-like SAM-binding methyltransferase superfamily. TRM5/TYW2 family. In terms of assembly, monomer.

Its subcellular location is the mitochondrion matrix. It is found in the nucleus. The protein localises to the cytoplasm. The catalysed reaction is guanosine(37) in tRNA + S-adenosyl-L-methionine = N(1)-methylguanosine(37) in tRNA + S-adenosyl-L-homocysteine + H(+). Specifically methylates the N1 position of guanosine-37 in various cytoplasmic and mitochondrial tRNAs. Methylation is not dependent on the nature of the nucleoside 5' of the target nucleoside. This is the first step in the biosynthesis of wybutosine (yW), a modified base adjacent to the anticodon of tRNAs and required for accurate decoding. This chain is tRNA (guanine(37)-N(1))-methyltransferase, found in Phaeosphaeria nodorum (strain SN15 / ATCC MYA-4574 / FGSC 10173) (Glume blotch fungus).